The chain runs to 878 residues: Alanine--tRNA ligase (878 aa).

Zn(2+)-binding residues include H567, H571, C669, and H673. A disordered region spans residues 841-860 (AVGGKGGGRPDMAEAGGKDP).

It belongs to the class-II aminoacyl-tRNA synthetase family. Zn(2+) is required as a cofactor.

Its subcellular location is the cytoplasm. It catalyses the reaction tRNA(Ala) + L-alanine + ATP = L-alanyl-tRNA(Ala) + AMP + diphosphate. Catalyzes the attachment of alanine to tRNA(Ala) in a two-step reaction: alanine is first activated by ATP to form Ala-AMP and then transferred to the acceptor end of tRNA(Ala). Also edits incorrectly charged Ser-tRNA(Ala) and Gly-tRNA(Ala) via its editing domain. In Solibacter usitatus (strain Ellin6076), this protein is Alanine--tRNA ligase.